The primary structure comprises 277 residues: Diaminopimelate epimerase (277 aa).

Residues Asn15 and Asn74 each contribute to the substrate site. Cys83 (proton donor) is an active-site residue. Substrate-binding positions include 84 to 85 (GN), Asn159, Asn194, and 212 to 213 (ER). Residue Cys221 is the Proton acceptor of the active site. 222–223 (GT) is a binding site for substrate.

It belongs to the diaminopimelate epimerase family. In terms of assembly, homodimer.

It is found in the cytoplasm. The enzyme catalyses (2S,6S)-2,6-diaminopimelate = meso-2,6-diaminopimelate. It functions in the pathway amino-acid biosynthesis; L-lysine biosynthesis via DAP pathway; DL-2,6-diaminopimelate from LL-2,6-diaminopimelate: step 1/1. In terms of biological role, catalyzes the stereoinversion of LL-2,6-diaminopimelate (L,L-DAP) to meso-diaminopimelate (meso-DAP), a precursor of L-lysine and an essential component of the bacterial peptidoglycan. This Corynebacterium glutamicum (strain R) protein is Diaminopimelate epimerase.